The primary structure comprises 470 residues: tRNA modification GTPase MnmE (470 aa).

3 residues coordinate (6S)-5-formyl-5,6,7,8-tetrahydrofolate: Lys27, Glu90, and Arg129. The region spanning 231–391 (GVSLVLAGKP…LRDFLNQRFL (161 aa)) is the TrmE-type G domain. Residues 241 to 246 (NVGKSS), 260 to 266 (TPFPGTT), and 285 to 288 (DTAG) contribute to the GTP site. Residues Ser245 and Thr266 each contribute to the Mg(2+) site. Lys470 contacts (6S)-5-formyl-5,6,7,8-tetrahydrofolate.

It belongs to the TRAFAC class TrmE-Era-EngA-EngB-Septin-like GTPase superfamily. TrmE GTPase family. In terms of assembly, homodimer. Heterotetramer of two MnmE and two MnmG subunits. The cofactor is K(+).

It localises to the cytoplasm. Its function is as follows. Exhibits a very high intrinsic GTPase hydrolysis rate. Involved in the addition of a carboxymethylaminomethyl (cmnm) group at the wobble position (U34) of certain tRNAs, forming tRNA-cmnm(5)s(2)U34. The polypeptide is tRNA modification GTPase MnmE (Syntrophobacter fumaroxidans (strain DSM 10017 / MPOB)).